Here is a 199-residue protein sequence, read N- to C-terminus: COMM domain-containing protein 2 (199 aa).

Residues 123-190 (SYHNLEWRLD…QALEEMKTNH (68 aa)) form the COMM domain.

The protein belongs to the COMM domain-containing protein 2 family. In terms of assembly, component of the commander complex consisting of the CCC subcomplex and the retriever subcomplex. Component of the CCC (COMMD/CCDC22/CCDC93) subcomplex consisting of COMMD1, COMMD2, COMMD3, COMMD4, COMMD5, COMMD6, COMMD7, COMMD8, COMMD9, COMMD10, CCDC22 and CCDC93; within the complex forms a heterodimer with COMMD3. Interacts with RELA, RELB, NFKB1/p105, NFKB2/p100. Interacts with CCDC22, CCDC93, SCNN1B, CUL3, CUL4B, CUL5, CUL7.

The protein localises to the cytoplasm. Functionally, scaffold protein in the commander complex that is essential for endosomal recycling of transmembrane cargos; the commander complex is composed of the CCC subcomplex and the retriever subcomplex. May modulate activity of cullin-RING E3 ubiquitin ligase (CRL) complexes. May down-regulate activation of NF-kappa-B. The polypeptide is COMM domain-containing protein 2 (COMMD2) (Pongo abelii (Sumatran orangutan)).